A 430-amino-acid chain; its full sequence is Carbamoyl phosphate synthase arginine-specific small chain (430 aa).

The transit peptide at 1–9 directs the protein to the mitochondrion; the sequence is MLSATKRYL. Positions 219–407 constitute a Glutamine amidotransferase type-1 domain; that stretch reads HIAVLDCGAK…FDNINVYKKS (189 aa). Cys-296 functions as the Nucleophile in the catalytic mechanism. Residues His-380 and Glu-382 contribute to the active site.

This sequence belongs to the CarA family. Heterodimer composed of 2 chains; the small (or glutamine) chain promotes the hydrolysis of glutamine to ammonia, which is used by the large (or ammonia) chain to synthesize carbamoyl phosphate.

It is found in the mitochondrion matrix. The catalysed reaction is hydrogencarbonate + L-glutamine + 2 ATP + H2O = carbamoyl phosphate + L-glutamate + 2 ADP + phosphate + 2 H(+). It carries out the reaction L-glutamine + H2O = L-glutamate + NH4(+). It participates in amino-acid biosynthesis; L-arginine biosynthesis; carbamoyl phosphate from bicarbonate: step 1/1. Its function is as follows. Small subunit of the arginine-specific carbamoyl phosphate synthase (CPSase). CPSase catalyzes the formation of carbamoyl phosphate from the ammonia moiety of glutamine, carbonate, and phosphate donated by ATP, the first step of the arginine biosynthetic pathway. The small subunit (glutamine amidotransferase) binds and cleaves glutamine to supply the large subunit with the substrate ammonia. The protein is Carbamoyl phosphate synthase arginine-specific small chain (CPA1) of Candida albicans (strain SC5314 / ATCC MYA-2876) (Yeast).